A 470-amino-acid polypeptide reads, in one-letter code: MTATRLPDGFAVQVDRRVRVLGDGSALLGGSPTRLLRLAPAARGLLCDGRLKVRDEVSAELARILLDATVAHPRPPSGPSHRDVTVVIPVRNNASGLRRLVTSLRGLRVIVVDDGSACPVESDDFVGAHCDIEVLHHPHSKGPAAARNTGLAACTTDFVAFLDSDVTPRRGWLESLLGHFCDPTVALVAPRIVSLVEGENPVARYEALHSSLDLGQREAPVLPHSTVSYVPSAAIVCRSSAIRDVGGFDETMHSGEDVDLCWRLIEAGARLRYEPIALVAHDHRTQLRDWIARKAFYGGSAAPLAVRHPDKTAPLVISGGALMAWILMSIGTGLGRLASLVIAVLTGRRIARAMRCAETSFLDVLAVATRGLWAAALQLASAICRHYWPLALLAAILSRRCRRVVLIAAVVDGVVDWLRRREGADDDAEPIGPLTYLVLKRVDDLAYGAGLWYGVVRERNIGALKPQIRT.

Residues 315–335 (LVISGGALMAWILMSIGTGLG) traverse the membrane as a helical segment.

The protein belongs to the glycosyltransferase 2 family.

It localises to the cell membrane. Functionally, involved in the biosynthesis of the enzyme cofactor mycofactocin (MFT). Acts as a glycosyltransferase that catalyzes the oligoglycosylation of pre-mycofactocin (PMFT), adding up to nine beta-1,4-linked glucose residues. Is required for the in vivo ethanol assimilation in M.smegmatis. The polypeptide is Pre-mycofactocin glycosyltransferase (mftF) (Mycobacterium tuberculosis (strain CDC 1551 / Oshkosh)).